The sequence spans 178 residues: Probable chorismate pyruvate-lyase (178 aa).

Residues Met37, Arg78, Leu114, and Glu165 each contribute to the substrate site.

The protein belongs to the UbiC family.

The protein resides in the cytoplasm. It carries out the reaction chorismate = 4-hydroxybenzoate + pyruvate. The protein operates within cofactor biosynthesis; ubiquinone biosynthesis. Functionally, removes the pyruvyl group from chorismate, with concomitant aromatization of the ring, to provide 4-hydroxybenzoate (4HB) for the ubiquinone pathway. The polypeptide is Probable chorismate pyruvate-lyase (Aeromonas hydrophila subsp. hydrophila (strain ATCC 7966 / DSM 30187 / BCRC 13018 / CCUG 14551 / JCM 1027 / KCTC 2358 / NCIMB 9240 / NCTC 8049)).